The chain runs to 276 residues: MKVIKTLSIINFFIFVTFNIKNESKYSNTFINNAYNMSIRRSMAESNPSTGAGGSGSAGGSGSAGGSGSAGGSGSAGGSGSAGSGDGNGANPGADAERSPSTPATTTTTTTTNDAEASTSTSSENPNHNNAETNPKGKGEVQKPNQANKETQNNSNVQQDSQTKSNVPPTQDADTKSPTAQPEQAENSAPIAEQTESPELQSAPENKGTGQHGHMHGSRNNHPQNTSDSQKECTDGNKENCGAAPSLLSNSSNIASINKFVVLISATLVLSFAIFI.

The signal sequence occupies residues 1-20 (MKVIKTLSIINFFIFVTFNI). Residues N22 and N36 are each glycosylated (N-linked (GlcNAc...) asparagine). Positions 44-202 (AESNPSTGAG…EQTESPELQS (159 aa)) are polymorphic region. Residues 44–242 (AESNPSTGAG…CTDGNKENCG (199 aa)) form a disordered region. Positions 51–90 (GAGGSGSAGGSGSAGGSGSAGGSGSAGGSGSAGSGDGNGA) are enriched in gly residues. 5 tandem repeats follow at residues 53–58 (GGSGSA), 59–64 (GGSGSA), 65–70 (GGSGSA), 71–76 (GGSGSA), and 77–82 (GGSGSA). Positions 53 to 82 (GGSGSAGGSGSAGGSGSAGGSGSAGGSGSA) are 5 X 6 AA tandem repeats of G-G-S-G-S-A. Over residues 91–127 (NPGADAERSPSTPATTTTTTTTNDAEASTSTSSENPN) the composition is skewed to low complexity. Composition is skewed to polar residues over residues 143–169 (KPNQ…NVPP), 176–187 (KSPTAQPEQAEN), and 194–204 (QTESPELQSAP). Residue N153 is glycosylated (N-linked (GlcNAc...) asparagine). An N-linked (GlcNAc...) asparagine glycan is attached at N225. Residues 229–238 (SQKECTDGNK) show a composition bias toward basic and acidic residues. C233 and C241 form a disulfide bridge. The N-linked (GlcNAc...) asparagine glycan is linked to N250. The GPI-anchor amidated asparagine moiety is linked to residue N250. The propeptide at 251–276 (SSNIASINKFVVLISATLVLSFAIFI) is removed in mature form.

Its subcellular location is the cell membrane. Functionally, may play a role in the merozoite attachment to the erythrocyte. This is Merozoite surface protein 2 from Plasmodium falciparum (isolate 7G8).